The following is a 602-amino-acid chain: Raftlin (602 aa).

G2 carries the N-myristoyl glycine lipid modification. A lipid anchor (S-palmitoyl cysteine) is attached at C3. Over residues 178 to 195 (TPASNNSVQSRDNKNVSN) the composition is skewed to polar residues. 3 disordered regions span residues 178–282 (TPAS…RCSK), 451–495 (KKES…EVTE), and 524–567 (NETA…QSAP). Composition is skewed to basic and acidic residues over residues 197 to 209 (PEDH…EKID) and 244 to 265 (PDCK…REAP). A compositionally biased stretch (basic residues) spans 468 to 477 (KPMKKSRKTK).

It belongs to the raftlin family.

It localises to the cell membrane. Its function is as follows. May play a pivotal role in the formation and/or maintenance of lipid rafts. May regulate B-cell antigen receptor-mediated signaling. The protein is Raftlin (RFTN1) of Gallus gallus (Chicken).